The following is a 587-amino-acid chain: Mitogen-activated protein kinase 4 (587 aa).

The Protein kinase domain occupies Phe-20 to Met-312. ATP-binding positions include Leu-26–Val-34 and Lys-49. Asp-149 acts as the Proton acceptor in catalysis. At Ser-186 the chain carries Phosphoserine; by PAK1, PAK2 and PAK3. The SEG motif motif lies at Ser-186–Gly-188. The FRIEDE motif signature appears at Phe-328–Glu-333. Basic and acidic residues-rich tracts occupy residues Gln-373–Arg-383 and Val-395–His-413. Residues Gln-373–His-413 are disordered. Ser-434 bears the Phosphoserine mark. Residues Ser-499–Ser-534 are disordered.

This sequence belongs to the protein kinase superfamily. CMGC Ser/Thr protein kinase family. MAP kinase subfamily. Homodimer. Heterodimer with ERK3/MAPK6. Interacts with (via FRIEDE motif) MAPKAPK5. The cofactor is Mg(2+). Phosphorylated at Ser-186 by PAK1, PAK2 and PAK3 resulting in catalytic activation. Phosphorylated by MAPKAPK5 at other sites. As to expression, high expression in heart and brain.

Its subcellular location is the cytoplasm. It localises to the nucleus. It catalyses the reaction L-seryl-[protein] + ATP = O-phospho-L-seryl-[protein] + ADP + H(+). It carries out the reaction L-threonyl-[protein] + ATP = O-phospho-L-threonyl-[protein] + ADP + H(+). Activated by phosphorylation at Ser-186. Functionally, atypical MAPK protein. Phosphorylates microtubule-associated protein 2 (MAP2) and MAPKAPK5. The precise role of the complex formed with MAPKAPK5 is still unclear, but the complex follows a complex set of phosphorylation events: upon interaction with atypical MAPKAPK5, ERK4/MAPK4 is phosphorylated at Ser-186 and then mediates phosphorylation and activation of MAPKAPK5, which in turn phosphorylates ERK4/MAPK4. May promote entry in the cell cycle. This is Mitogen-activated protein kinase 4 (MAPK4) from Homo sapiens (Human).